The chain runs to 268 residues: Hydroxyethylthiazole kinase (268 aa).

A substrate-binding site is contributed by methionine 45. 2 residues coordinate ATP: arginine 121 and threonine 167. Residue glycine 194 coordinates substrate.

It belongs to the Thz kinase family. Mg(2+) serves as cofactor.

The enzyme catalyses 5-(2-hydroxyethyl)-4-methylthiazole + ATP = 4-methyl-5-(2-phosphooxyethyl)-thiazole + ADP + H(+). Its pathway is cofactor biosynthesis; thiamine diphosphate biosynthesis; 4-methyl-5-(2-phosphoethyl)-thiazole from 5-(2-hydroxyethyl)-4-methylthiazole: step 1/1. Catalyzes the phosphorylation of the hydroxyl group of 4-methyl-5-beta-hydroxyethylthiazole (THZ). The polypeptide is Hydroxyethylthiazole kinase (Bacillus thuringiensis subsp. konkukian (strain 97-27)).